The following is a 608-amino-acid chain: Glutamyl-tRNA(Gln) amidotransferase subunit E (608 aa).

It belongs to the GatB/GatE family. GatE subfamily. Heterodimer of GatD and GatE.

The catalysed reaction is L-glutamyl-tRNA(Gln) + L-glutamine + ATP + H2O = L-glutaminyl-tRNA(Gln) + L-glutamate + ADP + phosphate + H(+). Its function is as follows. Allows the formation of correctly charged Gln-tRNA(Gln) through the transamidation of misacylated Glu-tRNA(Gln) in organisms which lack glutaminyl-tRNA synthetase. The reaction takes place in the presence of glutamine and ATP through an activated gamma-phospho-Glu-tRNA(Gln). The GatDE system is specific for glutamate and does not act on aspartate. In Pyrobaculum aerophilum (strain ATCC 51768 / DSM 7523 / JCM 9630 / CIP 104966 / NBRC 100827 / IM2), this protein is Glutamyl-tRNA(Gln) amidotransferase subunit E.